Consider the following 383-residue polypeptide: Succinyl-diaminopimelate desuccinylase (383 aa).

Position 73 (histidine 73) interacts with Zn(2+). The active site involves aspartate 75. Aspartate 107 is a binding site for Zn(2+). Glutamate 141 functions as the Proton acceptor in the catalytic mechanism. Zn(2+) contacts are provided by glutamate 142, glutamate 170, and histidine 356.

The protein belongs to the peptidase M20A family. DapE subfamily. In terms of assembly, homodimer. The cofactor is Zn(2+). Co(2+) is required as a cofactor.

It carries out the reaction N-succinyl-(2S,6S)-2,6-diaminopimelate + H2O = (2S,6S)-2,6-diaminopimelate + succinate. The protein operates within amino-acid biosynthesis; L-lysine biosynthesis via DAP pathway; LL-2,6-diaminopimelate from (S)-tetrahydrodipicolinate (succinylase route): step 3/3. Functionally, catalyzes the hydrolysis of N-succinyl-L,L-diaminopimelic acid (SDAP), forming succinate and LL-2,6-diaminopimelate (DAP), an intermediate involved in the bacterial biosynthesis of lysine and meso-diaminopimelic acid, an essential component of bacterial cell walls. This Pseudomonas aeruginosa (strain ATCC 15692 / DSM 22644 / CIP 104116 / JCM 14847 / LMG 12228 / 1C / PRS 101 / PAO1) protein is Succinyl-diaminopimelate desuccinylase.